The sequence spans 306 residues: Aspartate carbamoyltransferase catalytic subunit (306 aa).

Residues Arg-55 and Thr-56 each coordinate carbamoyl phosphate. Residue Lys-84 participates in L-aspartate binding. Residues Arg-105, His-133, and Gln-136 each coordinate carbamoyl phosphate. Arg-166 and Arg-227 together coordinate L-aspartate. Carbamoyl phosphate contacts are provided by Leu-265 and Pro-266.

The protein belongs to the aspartate/ornithine carbamoyltransferase superfamily. ATCase family. Heterododecamer (2C3:3R2) of six catalytic PyrB chains organized as two trimers (C3), and six regulatory PyrI chains organized as three dimers (R2).

The catalysed reaction is carbamoyl phosphate + L-aspartate = N-carbamoyl-L-aspartate + phosphate + H(+). It participates in pyrimidine metabolism; UMP biosynthesis via de novo pathway; (S)-dihydroorotate from bicarbonate: step 2/3. Its function is as follows. Catalyzes the condensation of carbamoyl phosphate and aspartate to form carbamoyl aspartate and inorganic phosphate, the committed step in the de novo pyrimidine nucleotide biosynthesis pathway. The protein is Aspartate carbamoyltransferase catalytic subunit of Aeromonas salmonicida (strain A449).